Consider the following 149-residue polypeptide: Transcriptional repressor NrdR (149 aa).

Residues cysteine 3–cysteine 34 fold into a zinc finger. One can recognise an ATP-cone domain in the interval proline 49–aspartate 139.

Belongs to the NrdR family. It depends on Zn(2+) as a cofactor.

Negatively regulates transcription of bacterial ribonucleotide reductase nrd genes and operons by binding to NrdR-boxes. The chain is Transcriptional repressor NrdR from Proteus mirabilis (strain HI4320).